Here is a 245-residue protein sequence, read N- to C-terminus: 1-(5-phosphoribosyl)-5-[(5-phosphoribosylamino)methylideneamino] imidazole-4-carboxamide isomerase (245 aa).

Asp-7 functions as the Proton acceptor in the catalytic mechanism. Catalysis depends on Asp-129, which acts as the Proton donor.

The protein belongs to the HisA/HisF family.

It is found in the cytoplasm. It carries out the reaction 1-(5-phospho-beta-D-ribosyl)-5-[(5-phospho-beta-D-ribosylamino)methylideneamino]imidazole-4-carboxamide = 5-[(5-phospho-1-deoxy-D-ribulos-1-ylimino)methylamino]-1-(5-phospho-beta-D-ribosyl)imidazole-4-carboxamide. It participates in amino-acid biosynthesis; L-histidine biosynthesis; L-histidine from 5-phospho-alpha-D-ribose 1-diphosphate: step 4/9. This Aliivibrio salmonicida (strain LFI1238) (Vibrio salmonicida (strain LFI1238)) protein is 1-(5-phosphoribosyl)-5-[(5-phosphoribosylamino)methylideneamino] imidazole-4-carboxamide isomerase.